A 163-amino-acid polypeptide reads, in one-letter code: Putative 4-hydroxy-4-methyl-2-oxoglutarate aldolase (163 aa).

Residues 76–79 (GDML) and Arg98 each bind substrate. Residue Asp99 participates in a divalent metal cation binding.

The protein belongs to the class II aldolase/RraA-like family. In terms of assembly, homotrimer. Requires a divalent metal cation as cofactor.

It carries out the reaction 4-hydroxy-4-methyl-2-oxoglutarate = 2 pyruvate. The catalysed reaction is oxaloacetate + H(+) = pyruvate + CO2. In terms of biological role, catalyzes the aldol cleavage of 4-hydroxy-4-methyl-2-oxoglutarate (HMG) into 2 molecules of pyruvate. Also contains a secondary oxaloacetate (OAA) decarboxylase activity due to the common pyruvate enolate transition state formed following C-C bond cleavage in the retro-aldol and decarboxylation reactions. The chain is Putative 4-hydroxy-4-methyl-2-oxoglutarate aldolase from Pseudomonas entomophila (strain L48).